We begin with the raw amino-acid sequence, 181 residues long: Organ-specific protein S2 (181 aa).

A run of 4 repeats spans residues 59 to 84 (HAKE…DNEI), 85 to 110 (HAKE…DNEI), 111 to 136 (HANE…DNEI), and 137 to 162 (HANE…DNEI). The tract at residues 59–162 (HAKENMGAIG…NASAYGDNEI (104 aa)) is 4 X 26 AA tandem repeats. Residues 94-181 (GEFEPRPNAS…PRPSMTKYNA (88 aa)) form a disordered region.

It to organ specific protein P4. In terms of tissue distribution, expressed in stems.

The chain is Organ-specific protein S2 from Pisum sativum (Garden pea).